The sequence spans 161 residues: SsrA-binding protein (161 aa).

Residues 139 to 153 (RESIKRKEENRELDR) show a composition bias toward basic and acidic residues. The disordered stretch occupies residues 139-161 (RESIKRKEENRELDRLRKRRRQE).

The protein belongs to the SmpB family.

It is found in the cytoplasm. Functionally, required for rescue of stalled ribosomes mediated by trans-translation. Binds to transfer-messenger RNA (tmRNA), required for stable association of tmRNA with ribosomes. tmRNA and SmpB together mimic tRNA shape, replacing the anticodon stem-loop with SmpB. tmRNA is encoded by the ssrA gene; the 2 termini fold to resemble tRNA(Ala) and it encodes a 'tag peptide', a short internal open reading frame. During trans-translation Ala-aminoacylated tmRNA acts like a tRNA, entering the A-site of stalled ribosomes, displacing the stalled mRNA. The ribosome then switches to translate the ORF on the tmRNA; the nascent peptide is terminated with the 'tag peptide' encoded by the tmRNA and targeted for degradation. The ribosome is freed to recommence translation, which seems to be the essential function of trans-translation. This chain is SsrA-binding protein, found in Syntrophobacter fumaroxidans (strain DSM 10017 / MPOB).